A 364-amino-acid polypeptide reads, in one-letter code: Protein leg1b (364 aa).

The signal sequence occupies residues 1–22 (MSEMGFLRSVAAVLLLAVFSHA). N-linked (GlcNAc...) asparagine glycosylation is present at asparagine 70.

Belongs to the LEG1 family. As to expression, detected in all tissues tested, with the highest levels in serum (at protein level). At mRNA level, only expressed in liver.

Its subcellular location is the secreted. Involved in early development of liver, exocrine pancreas and intestine, probably through cell cycle regulation. In liver, its function is partially redundant with leg1a function. This is Protein leg1b from Danio rerio (Zebrafish).